The primary structure comprises 1571 residues: Pentafunctional AROM polypeptide (1571 aa).

The segment at 1–384 is 3-dehydroquinate synthase; sequence MEQPTTIQIL…HEQKASVVSN (384 aa). NAD(+)-binding positions include 44-46, 81-84, 114-116, and D119; these read DTN, ESSK, and GGV. R130 lines the 7-phospho-2-dehydro-3-deoxy-D-arabino-heptonate pocket. 139–140 contributes to the NAD(+) binding site; it reads TT. Positions 146 and 152 each coordinate 7-phospho-2-dehydro-3-deoxy-D-arabino-heptonate. K161 serves as a coordination point for NAD(+). N162 is a 7-phospho-2-dehydro-3-deoxy-D-arabino-heptonate binding site. Residues 179-182 and N190 contribute to the NAD(+) site; that span reads FLNT. E194 lines the Zn(2+) pocket. Residues 194-197 and K250 each bind 7-phospho-2-dehydro-3-deoxy-D-arabino-heptonate; that span reads EVIK. E260 acts as the Proton acceptor; for 3-dehydroquinate synthase activity in catalysis. 7-phospho-2-dehydro-3-deoxy-D-arabino-heptonate contacts are provided by residues 264-268 and H271; that span reads RNLLN. H271 serves as a coordination point for Zn(2+). The Proton acceptor; for 3-dehydroquinate synthase activity role is filled by H275. Residues H287 and K356 each contribute to the 7-phospho-2-dehydro-3-deoxy-D-arabino-heptonate site. H287 provides a ligand contact to Zn(2+). The tract at residues 397–843 is EPSP synthase; sequence VLPGIPKPLN…WDALAQTFKV (447 aa). C825 acts as the For EPSP synthase activity in catalysis. The segment at 866–1057 is shikimate kinase; that stretch reads ASIFIIGMRG…KKKDHSFFVS (192 aa). An ATP-binding site is contributed by 872 to 879; sequence GMRGAGKT. The segment at 1058-1278 is 3-dehydroquinase; that stretch reads LTLPDLQLSA…AAPGQVSAKD (221 aa). H1181 serves as the catalytic Proton acceptor; for 3-dehydroquinate dehydratase activity. The active-site Schiff-base intermediate with substrate; for 3-dehydroquinate dehydratase activity is the K1209. The segment at 1291–1571 is shikimate dehydrogenase; it reads AKKFALFGKP…EDARAAVMNI (281 aa).

It in the N-terminal section; belongs to the sugar phosphate cyclases superfamily. Dehydroquinate synthase family. This sequence in the 2nd section; belongs to the EPSP synthase family. The protein in the 3rd section; belongs to the shikimate kinase family. In the 4th section; belongs to the type-I 3-dehydroquinase family. It in the C-terminal section; belongs to the shikimate dehydrogenase family. In terms of assembly, homodimer. Zn(2+) is required as a cofactor.

Its subcellular location is the cytoplasm. It catalyses the reaction 7-phospho-2-dehydro-3-deoxy-D-arabino-heptonate = 3-dehydroquinate + phosphate. It carries out the reaction 3-dehydroquinate = 3-dehydroshikimate + H2O. The catalysed reaction is shikimate + NADP(+) = 3-dehydroshikimate + NADPH + H(+). The enzyme catalyses shikimate + ATP = 3-phosphoshikimate + ADP + H(+). It catalyses the reaction 3-phosphoshikimate + phosphoenolpyruvate = 5-O-(1-carboxyvinyl)-3-phosphoshikimate + phosphate. Its pathway is metabolic intermediate biosynthesis; chorismate biosynthesis; chorismate from D-erythrose 4-phosphate and phosphoenolpyruvate: step 2/7. The protein operates within metabolic intermediate biosynthesis; chorismate biosynthesis; chorismate from D-erythrose 4-phosphate and phosphoenolpyruvate: step 3/7. It participates in metabolic intermediate biosynthesis; chorismate biosynthesis; chorismate from D-erythrose 4-phosphate and phosphoenolpyruvate: step 4/7. It functions in the pathway metabolic intermediate biosynthesis; chorismate biosynthesis; chorismate from D-erythrose 4-phosphate and phosphoenolpyruvate: step 5/7. Its pathway is metabolic intermediate biosynthesis; chorismate biosynthesis; chorismate from D-erythrose 4-phosphate and phosphoenolpyruvate: step 6/7. Functionally, the AROM polypeptide catalyzes 5 consecutive enzymatic reactions in prechorismate polyaromatic amino acid biosynthesis. The polypeptide is Pentafunctional AROM polypeptide (Arthroderma otae (strain ATCC MYA-4605 / CBS 113480) (Microsporum canis)).